Here is a 483-residue protein sequence, read N- to C-terminus: Probable glycine dehydrogenase (decarboxylating) subunit 2 (483 aa).

Residues 1 to 24 (MLIFDHSRPGRTAAAQLPATGGDL) are disordered. An N6-(pyridoxal phosphate)lysine modification is found at lysine 264.

It belongs to the GcvP family. C-terminal subunit subfamily. In terms of assembly, the glycine cleavage system is composed of four proteins: P, T, L and H. In this organism, the P 'protein' is a heterodimer of two subunits. The cofactor is pyridoxal 5'-phosphate.

It catalyses the reaction N(6)-[(R)-lipoyl]-L-lysyl-[glycine-cleavage complex H protein] + glycine + H(+) = N(6)-[(R)-S(8)-aminomethyldihydrolipoyl]-L-lysyl-[glycine-cleavage complex H protein] + CO2. Its function is as follows. The glycine cleavage system catalyzes the degradation of glycine. The P protein binds the alpha-amino group of glycine through its pyridoxal phosphate cofactor; CO(2) is released and the remaining methylamine moiety is then transferred to the lipoamide cofactor of the H protein. This chain is Probable glycine dehydrogenase (decarboxylating) subunit 2, found in Thiobacillus denitrificans (strain ATCC 25259 / T1).